The sequence spans 396 residues: Elongation factor Tu 1 (396 aa).

The region spanning 10-206 (KLHVNVGTIG…ALDTFIPDPT (197 aa)) is the tr-type G domain. The G1 stretch occupies residues 19–26 (GHVDHGKT). Residue 19–26 (GHVDHGKT) participates in GTP binding. Thr-26 contacts Mg(2+). Residues 60–64 (GITIS) form a G2 region. The interval 81–84 (DCPG) is G3. GTP-binding positions include 81-85 (DCPGH) and 136-139 (NKAD). Residues 136–139 (NKAD) form a G4 region. Residues 174–176 (SAR) form a G5 region.

This sequence belongs to the TRAFAC class translation factor GTPase superfamily. Classic translation factor GTPase family. EF-Tu/EF-1A subfamily. In terms of assembly, monomer.

It is found in the cytoplasm. The enzyme catalyses GTP + H2O = GDP + phosphate + H(+). GTP hydrolase that promotes the GTP-dependent binding of aminoacyl-tRNA to the A-site of ribosomes during protein biosynthesis. The sequence is that of Elongation factor Tu 1 from Xanthomonas campestris pv. campestris (strain B100).